The sequence spans 513 residues: ATP synthase subunit alpha (513 aa).

G169–T176 is an ATP binding site.

Belongs to the ATPase alpha/beta chains family. F-type ATPases have 2 components, CF(1) - the catalytic core - and CF(0) - the membrane proton channel. CF(1) has five subunits: alpha(3), beta(3), gamma(1), delta(1), epsilon(1). CF(0) has three main subunits: a(1), b(2) and c(9-12). The alpha and beta chains form an alternating ring which encloses part of the gamma chain. CF(1) is attached to CF(0) by a central stalk formed by the gamma and epsilon chains, while a peripheral stalk is formed by the delta and b chains.

It localises to the cell inner membrane. It carries out the reaction ATP + H2O + 4 H(+)(in) = ADP + phosphate + 5 H(+)(out). In terms of biological role, produces ATP from ADP in the presence of a proton gradient across the membrane. The alpha chain is a regulatory subunit. This is ATP synthase subunit alpha from Edwardsiella ictaluri (strain 93-146).